The chain runs to 227 residues: DNA packaging ATPase P9 (227 aa).

Gly16–Thr23 is an ATP binding site.

As to quaternary structure, heterodimer of P6 and P9; further multimerizes as hexamers of heterodimers. Part of the dodecameric portal complex that is composed of the packaging efficiency factor P6, the DNA packaging ATPase P9, and the internal heterododecamer P20/P22 which spans the virion inner membrane.

It localises to the virion. In terms of biological role, together with the packaging efficiency factor P6, forms the external part of the portal vertex that is embeded in the capsid and which plays critical roles in genome packaging and genome ejection. Both proteins multimerize as a single ring-shaped heterdodecamer arranged around a central channel. This Enterobacteria phage PRD1 (Bacteriophage PRD1) protein is DNA packaging ATPase P9 (IX).